Here is a 274-residue protein sequence, read N- to C-terminus: Penicillin-insensitive murein endopeptidase (274 aa).

A signal peptide spans Met1–Ala19. Disulfide bonds link Cys44–Cys265, Cys187–Cys235, and Cys216–Cys223. Positions 110, 113, 120, 147, 150, and 211 each coordinate Zn(2+). A disordered region spans residues Asp225–Leu274.

It belongs to the peptidase M74 family. Dimer. The cofactor is Zn(2+).

It is found in the periplasm. Functionally, murein endopeptidase that cleaves the D-alanyl-meso-2,6-diamino-pimelyl amide bond that connects peptidoglycan strands. Likely plays a role in the removal of murein from the sacculus. This chain is Penicillin-insensitive murein endopeptidase, found in Salmonella agona (strain SL483).